Here is a 109-residue protein sequence, read N- to C-terminus: Immunity protein CdiI (109 aa).

As to quaternary structure, specifically interacts with cognate toxin CdiA, which inhibits the toxin.

In terms of biological role, immunity protein component of a toxin-immunity protein module, which functions as a cellular contact-dependent growth inhibition (CDI) system. CDI modules allow bacteria to communicate with and inhibit the growth of closely related neighboring bacteria in a contact-dependent fashion. Neutralizes the toxic activity of cognate toxin CdiA (C-terminal 282 residue CT fragment) upon expression in E.coli. Does not inhibit toxic activity of CdiA from other strains of B.pseudomallei. This Burkholderia pseudomallei (Pseudomonas pseudomallei) protein is Immunity protein CdiI (cdiI).